We begin with the raw amino-acid sequence, 105 residues long: MTTNRLVLSGTVCKVPIRKVSPAGIPHCQFVLEHRSQQQEAGLSRQAWCRMPVIASGQLLQVLTHSITVGSRLTVSGFISCHQGRNGLNKLVLHAEQIELIDSGD.

The region spanning 1-102 (MTTNRLVLSG…LHAEQIELID (102 aa)) is the SSB domain.

It belongs to the PriB family. Homodimer. Interacts with PriA and DnaT. Component of the replication restart primosome. Primosome assembly occurs via a 'hand-off' mechanism. PriA binds to replication forks, subsequently PriB then DnaT bind; DnaT then displaces ssDNA to generate the helicase loading substrate.

Functionally, involved in the restart of stalled replication forks, which reloads the replicative helicase on sites other than the origin of replication; the PriA-PriB pathway is the major replication restart pathway. During primosome assembly it facilitates complex formation between PriA and DnaT on DNA; stabilizes PriA on DNA. Stimulates the DNA unwinding activity of PriA helicase. The polypeptide is Replication restart protein PriB (Photorhabdus laumondii subsp. laumondii (strain DSM 15139 / CIP 105565 / TT01) (Photorhabdus luminescens subsp. laumondii)).